Here is a 254-residue protein sequence, read N- to C-terminus: Bax inhibitor 1 homolog (254 aa).

The Cytoplasmic segment spans residues 1-43 (MASTSNRNFFSSNMTQIPMDEKIRIALQFNNLSQSTKQTLTKV). A helical membrane pass occupies residues 44–64 (YCALAIGILTATVGVLFSMFI). Over 65 to 66 (YR) the chain is Lumenal. The helical transmembrane segment at 67 to 87 (PGFLMTLLLVIGSAILFATTP) threads the bilayer. At 88-98 (RTQDYKTQVKR) the chain is on the cytoplasmic side. A helical transmembrane segment spans residues 99–119 (FTLFNLVTFVTGMSSSGLIEL). Residues 120 to 126 (YMDINSS) lie on the Lumenal side of the membrane. A helical transmembrane segment spans residues 127 to 147 (IVLNAFMATCGIFISFTLFSL). The Cytoplasmic segment spans residues 148 to 152 (LTNKR). A helical membrane pass occupies residues 153-173 (LYIFIGSSLASLSIGIFVLAL). Residues 174 to 187 (TRLFGGYSEPLDQL) are Lumenal-facing. Residues 188–208 (FILAILASSVLFIIFDTQIMV) traverse the membrane as a helical segment. The Cytoplasmic portion of the chain corresponds to 209–217 (HRIENLGEK). The helical intramembrane region spans 218 to 238 (DVLFHAFILFYDFVDLFRVIL). Over 239-254 (KILAKKENKNNNKSRR) the chain is Cytoplasmic.

The protein belongs to the BI1 family.

The protein resides in the endoplasmic reticulum membrane. This chain is Bax inhibitor 1 homolog, found in Dictyostelium discoideum (Social amoeba).